We begin with the raw amino-acid sequence, 63 residues long: Mu-like prophage FluMu protein gp38 (63 aa).

This sequence to phage Mu protein gp38.

The protein is Mu-like prophage FluMu protein gp38 of Haemophilus influenzae (strain ATCC 51907 / DSM 11121 / KW20 / Rd).